The sequence spans 445 residues: Tubulin beta chain (445 aa).

The short motif at 1 to 4 is the MREI motif element; the sequence is MREI. A GTP-binding site is contributed by Gln-11. Ser-40 carries the post-translational modification Phosphoserine. Lys-58 is modified (N6-acetyllysine; alternate). An N6-succinyllysine; alternate modification is found at Lys-58. Residue Lys-58 forms a Glycyl lysine isopeptide (Lys-Gly) (interchain with G-Cter in ubiquitin); alternate linkage. Glu-69, Ser-138, Gly-142, Thr-143, and Gly-144 together coordinate GTP. A Mg(2+)-binding site is contributed by Glu-69. Ser-172 is modified (phosphoserine; by CDK1). The GTP site is built by Asn-204 and Asn-226. Thr-285 and Thr-290 each carry phosphothreonine. Omega-N-methylarginine is present on Arg-318. A Glycyl lysine isopeptide (Lys-Gly) (interchain with G-Cter in ubiquitin) cross-link involves residue Lys-324. The interval 424 to 445 is disordered; sequence QYQDATADEQGEFEEEGEEDEA. The segment covering 429–445 has biased composition (acidic residues); sequence TADEQGEFEEEGEEDEA. Residue Glu-438 is modified to 5-glutamyl polyglutamate.

This sequence belongs to the tubulin family. As to quaternary structure, dimer of alpha and beta chains. A typical microtubule is a hollow water-filled tube with an outer diameter of 25 nm and an inner diameter of 15 nM. Alpha-beta heterodimers associate head-to-tail to form protofilaments running lengthwise along the microtubule wall with the beta-tubulin subunit facing the microtubule plus end conferring a structural polarity. Microtubules usually have 13 protofilaments but different protofilament numbers can be found in some organisms and specialized cells. Interacts with NCKAP5L. The cofactor is Mg(2+). Post-translationally, some glutamate residues at the C-terminus are polyglycylated, resulting in polyglycine chains on the gamma-carboxyl group. Glycylation is mainly limited to tubulin incorporated into axonemes (cilia and flagella) whereas glutamylation is prevalent in neuronal cells, centrioles, axonemes, and the mitotic spindle. Both modifications can coexist on the same protein on adjacent residues, and lowering polyglycylation levels increases polyglutamylation, and reciprocally. Cilia and flagella glycylation is required for their stability and maintenance. Flagella glycylation controls sperm motility. In terms of processing, some glutamate residues at the C-terminus are polyglutamylated, resulting in polyglutamate chains on the gamma-carboxyl group. Polyglutamylation plays a key role in microtubule severing by spastin (SPAST). SPAST preferentially recognizes and acts on microtubules decorated with short polyglutamate tails: severing activity by SPAST increases as the number of glutamates per tubulin rises from one to eight, but decreases beyond this glutamylation threshold. Phosphorylated on Ser-172 by CDK1 during the cell cycle, from metaphase to telophase, but not in interphase. This phosphorylation inhibits tubulin incorporation into microtubules.

It is found in the cytoplasm. The protein localises to the cytoskeleton. Its function is as follows. Tubulin is the major constituent of microtubules, a cylinder consisting of laterally associated linear protofilaments composed of alpha- and beta-tubulin heterodimers. Microtubules grow by the addition of GTP-tubulin dimers to the microtubule end, where a stabilizing cap forms. Below the cap, tubulin dimers are in GDP-bound state, owing to GTPase activity of alpha-tubulin. This is Tubulin beta chain from Sus scrofa (Pig).